The chain runs to 500 residues: Sodium/potassium/calcium exchanger 5 (500 aa).

An N-terminal signal peptide occupies residues 1 to 29 (MQTKGGQTWARRALLLGILWATAHLPLSG). Topologically, residues 30 to 66 (TSLPQRLPRATGNSTQCVISPSSEFPEGFFTRQERRD) are extracellular. The chain crosses the membrane as a helical span at residues 67–87 (GGIIIYFLIIVYMFMAISIVC). Residues 88 to 111 (DEYFLPSLEIISESLGLSQDVAGT) are Cytoplasmic-facing. The chain crosses the membrane as a helical span at residues 112-132 (TFMAAGSSAPELVTAFLGVFI). Residues 133-136 (TKGD) lie on the Extracellular side of the membrane. A helical membrane pass occupies residues 137-157 (IGISTILGSAIYNLLGICAAC). The Cytoplasmic portion of the chain corresponds to 158–169 (GLLSNTVSTLSC). A helical transmembrane segment spans residues 170–190 (WPLFRDCAAYTISAAAVLGII). The Extracellular portion of the chain corresponds to 191–195 (YDNQV). Residues 196–216 (YWYEGALLLLIYGLYVLVLCF) form a helical membrane-spanning segment. The Cytoplasmic segment spans residues 217–302 (DIKINQYIIK…PSVFNMPEAD (86 aa)). The chain crosses the membrane as a helical span at residues 303-323 (LKRIFWVLSLPIITLLFLTTP). The Extracellular portion of the chain corresponds to 324 to 333 (DCRKKFWKNY). A helical membrane pass occupies residues 334-354 (FVITFFMSAIWISAFTYILVW). The Cytoplasmic portion of the chain corresponds to 355-368 (MVTITGETLEIPDT). Residues 369 to 389 (VMGLTLLAAGTSIPDTIASVL) form a helical membrane-spanning segment. At 390 to 399 (VARKGKGDMA) the chain is on the extracellular side. Residues 400–420 (MSNIVGSNVFDMLCLGIPWFI) form a helical membrane-spanning segment. Over 421 to 437 (KTAFINGSAPAEVNSRG) the chain is Cytoplasmic. A helical membrane pass occupies residues 438 to 458 (LTYITISLNISIIFLFLAVHF). Residues 459–468 (NGWKLDRKLG) are Extracellular-facing. Residues 469-489 (IVCLLSYLGLATLSVLYELGI) traverse the membrane as a helical segment. At 490-500 (IGNNKIRGCGG) the chain is on the cytoplasmic side.

The protein belongs to the Ca(2+):cation antiporter (CaCA) (TC 2.A.19) family. SLC24A subfamily.

The protein resides in the golgi apparatus. The protein localises to the trans-Golgi network membrane. It localises to the melanosome. It catalyses the reaction Ca(2+)(out) + K(+)(out) + 4 Na(+)(in) = Ca(2+)(in) + K(+)(in) + 4 Na(+)(out). Its function is as follows. Calcium, potassium:sodium antiporter that transports 1 Ca(2+) and 1 K(+) to the melanosome in exchange for 4 cytoplasmic Na(+). Involved in pigmentation, possibly by participating in ion transport in melanosomes. Predominant sodium-calcium exchanger in melanocytes. This is Sodium/potassium/calcium exchanger 5 from Homo sapiens (Human).